The following is a 901-amino-acid chain: Modifier of cell death (901 aa).

Disordered regions lie at residues 147–169 and 218–245; these read AQKR…PRAA and PRKS…SPSP. A C2H2-type zinc finger spans residues 259–282; that stretch reads FKCAECGDGFPVMDRLCDHMIKQH. Disordered regions lie at residues 494–528, 682–717, and 779–901; these read KKEH…DDVP, QERV…SHEE, and HKAI…WDDN. A compositionally biased stretch (low complexity) spans 817–828; sequence EAAAKLIQAENE. A compositionally biased stretch (acidic residues) spans 829–840; the sequence is MVVEEEEVEEPP. Basic and acidic residues predominate over residues 846–866; the sequence is QVPKEKEVEVAEAEKLPEQVK.

Its function is as follows. Promotes programmed cell death. Its role in programmed cell death may be in conjunction with cell cycle regulatory factor efl-1 and the synthetic multivulva class B proteins dpl-1 and lin-35, and is independent of the ced-1, ced-8 and ced-9 pathways. The sequence is that of Modifier of cell death from Caenorhabditis elegans.